Consider the following 311-residue polypeptide: Putative RNA-binding protein R05D3.8 (311 aa).

Residues 155–235 form the RRM domain; that stretch reads KRLFVSYFPL…RRAVLKESVK (81 aa). Positions 261–270 are enriched in polar residues; sequence TPSRPVTSVH. The interval 261-311 is disordered; it reads TPSRPVTSVHASSSASSNHYDPSAAAGYAPLYHQPPESDPLSQCGYGPRKW.

This is Putative RNA-binding protein R05D3.8 from Caenorhabditis elegans.